A 174-amino-acid chain; its full sequence is Bacterial proteasome activator (174 aa).

Disordered stretches follow at residues 1 to 37 (MNND…PSLT) and 153 to 174 (SALP…GQYL). Residues 160-174 (GKPGQAGGQGTGQYL) show a composition bias toward gly residues. The HbYX motif motif lies at 172–174 (QYL).

The protein belongs to the Bpa family. Forms a homooligomeric, either hexameric or heptameric, ring-like structure which stacks co-axially with the proteasomal alpha-rings.

Functionally, interacts with the core proteasome alpha-subunit (PrcA) through its C-terminal hydrophobic-tyrosine-X motif (HbYX motif). Interaction of Bpa with the proteasome stimulates proteasomal peptidase and casein degradation activity, which suggests Bpa could play a role in the removal of non-native or damaged proteins by influencing the conformation of the proteasome complex upon interaction. This Mycobacterium leprae (strain TN) protein is Bacterial proteasome activator (bpa).